We begin with the raw amino-acid sequence, 348 residues long: MATINIIDVKKNYGAVPAVKGINLSVADGELIVLVGPSGCGKSTLLRMIAGLETISEGHVEIAGRNVNKAEPADRDIAMVFQNYALYPHMTVRGNLEYGLKNRGTERAEINRRVAEAAEILEIGPMLDRKPRELSGGQRQRVAMGRAIVREPAAFLFDEPLSNLDAKLRVQMRVEIRRLQRRLKTTSIYVTHDQLEAMTLADRLVVMNGGLVEQVGTPVAVYDRPASLFVASFIGSPPMNLVPIDVLRAADSASSLALPAGTDMVGLRPDALLVTKPAEPSVRLDATVELLEPIGGESHLHVRLGGSQQTVVLTVPGRPDFAENANIDVFARVGAMHPFNSDTGKRTD.

The ABC transporter domain occupies 4-234 (INIIDVKKNY…PASLFVASFI (231 aa)). 36 to 43 (GPSGCGKS) contributes to the ATP binding site.

It belongs to the ABC transporter superfamily. sn-glycerol-3-phosphate importer (TC 3.A.1.1.3) family. In terms of assembly, the complex is composed of two ATP-binding proteins (UgpC), two transmembrane proteins (UgpA and UgpE) and a solute-binding protein (UgpB).

It localises to the cell inner membrane. It carries out the reaction sn-glycerol 3-phosphate(out) + ATP + H2O = sn-glycerol 3-phosphate(in) + ADP + phosphate + H(+). Its function is as follows. Part of the ABC transporter complex UgpBAEC involved in sn-glycerol-3-phosphate (G3P) import. Responsible for energy coupling to the transport system. In Rhizobium johnstonii (strain DSM 114642 / LMG 32736 / 3841) (Rhizobium leguminosarum bv. viciae), this protein is sn-glycerol-3-phosphate import ATP-binding protein UgpC 3.